We begin with the raw amino-acid sequence, 186 residues long: MPYVRKTLETEVAVELRRGGDLAVETPIPFLTHMLETLLKYAGLGGVVKAVELRKLDDGHHVIEDVAIAVGRALDALLEDRRGIARFGHAVVPMDESIVMAAVDLGGRAYWVVRAKLPDVTIGGYPLRMFPHFVRTLAVEAKATIHIYARGTDPHHKVEAAHKALGLALRQALSPGEGLSTKGVLG.

Belongs to the imidazoleglycerol-phosphate dehydratase family.

It is found in the cytoplasm. The catalysed reaction is D-erythro-1-(imidazol-4-yl)glycerol 3-phosphate = 3-(imidazol-4-yl)-2-oxopropyl phosphate + H2O. It participates in amino-acid biosynthesis; L-histidine biosynthesis; L-histidine from 5-phospho-alpha-D-ribose 1-diphosphate: step 6/9. The chain is Imidazoleglycerol-phosphate dehydratase from Pyrobaculum aerophilum (strain ATCC 51768 / DSM 7523 / JCM 9630 / CIP 104966 / NBRC 100827 / IM2).